The primary structure comprises 356 residues: UDP-N-acetylglucosamine--N-acetylmuramyl-(pentapeptide) pyrophosphoryl-undecaprenol N-acetylglucosamine transferase (356 aa).

UDP-N-acetyl-alpha-D-glucosamine is bound by residues 12-14 (TGG), N124, R163, S188, I242, 261-266 (ALTVSE), and Q287.

The protein belongs to the glycosyltransferase 28 family. MurG subfamily.

The protein localises to the cell inner membrane. The enzyme catalyses di-trans,octa-cis-undecaprenyl diphospho-N-acetyl-alpha-D-muramoyl-L-alanyl-D-glutamyl-meso-2,6-diaminopimeloyl-D-alanyl-D-alanine + UDP-N-acetyl-alpha-D-glucosamine = di-trans,octa-cis-undecaprenyl diphospho-[N-acetyl-alpha-D-glucosaminyl-(1-&gt;4)]-N-acetyl-alpha-D-muramoyl-L-alanyl-D-glutamyl-meso-2,6-diaminopimeloyl-D-alanyl-D-alanine + UDP + H(+). It functions in the pathway cell wall biogenesis; peptidoglycan biosynthesis. Cell wall formation. Catalyzes the transfer of a GlcNAc subunit on undecaprenyl-pyrophosphoryl-MurNAc-pentapeptide (lipid intermediate I) to form undecaprenyl-pyrophosphoryl-MurNAc-(pentapeptide)GlcNAc (lipid intermediate II). This Pseudomonas fluorescens (strain ATCC BAA-477 / NRRL B-23932 / Pf-5) protein is UDP-N-acetylglucosamine--N-acetylmuramyl-(pentapeptide) pyrophosphoryl-undecaprenol N-acetylglucosamine transferase.